Here is a 308-residue protein sequence, read N- to C-terminus: Transcriptional adapter 1-1 (308 aa).

It belongs to the TADA1 family. Component of the Spt-Ada-Gcn5 acetyltransferase (SAGA) complex consisting of wda/Taf5L, Saf6, Taf9, Taf10b, Taf12, Ada1, Spt3, Spt7, Spt20, Sf3b3, Sf3b5, Nipped-A/Tra1, a histone acetyltransferase (HAT) module made up of Gcn5, Ada2b (Isoform B), Ada3 and Sgf29, and a deubiquitinase (DUB) module made up of not/nonstop, Sgf11 and e(y)2 tethered to SAGA by Atxn7. Not a component of the Ada2a-containing ATAC complex.

The protein localises to the nucleus. Functionally, component of the transcription regulatory complex SAGA, a multiprotein complex that activates transcription by remodeling chromatin and mediating histone acetylation and deubiquitination. The SAGA complex predominantly acetylates histone H3. This chain is Transcriptional adapter 1-1, found in Drosophila melanogaster (Fruit fly).